Reading from the N-terminus, the 334-residue chain is GTPase Obg (334 aa).

The 159-residue stretch at 1–159 (MRFVDEVVIK…KEVRLELNLL (159 aa)) folds into the Obg domain. An OBG-type G domain is found at 160–331 (ADVALLGLPN…LAKKLNEFLQ (172 aa)). GTP contacts are provided by residues 166 to 173 (GLPNAGKS), 191 to 195 (FTTMY), 212 to 215 (DIPG), 282 to 285 (NKID), and 312 to 314 (SAA). Ser-173 and Thr-193 together coordinate Mg(2+).

This sequence belongs to the TRAFAC class OBG-HflX-like GTPase superfamily. OBG GTPase family. In terms of assembly, monomer. Requires Mg(2+) as cofactor.

The protein resides in the cytoplasm. Functionally, an essential GTPase which binds GTP, GDP and possibly (p)ppGpp with moderate affinity, with high nucleotide exchange rates and a fairly low GTP hydrolysis rate. Plays a role in control of the cell cycle, stress response, ribosome biogenesis and in those bacteria that undergo differentiation, in morphogenesis control. This is GTPase Obg from Francisella tularensis subsp. mediasiatica (strain FSC147).